A 77-amino-acid polypeptide reads, in one-letter code: Serine protease inhibitor 3 (77 aa).

A signal peptide spans 1 to 17 (MMFTPLIVLTLLVLATA). 4 disulfides stabilise this stretch: cysteine 21-cysteine 53, cysteine 30-cysteine 48, cysteine 33-cysteine 44, and cysteine 55-cysteine 68. Residues 21 to 74 (CGPNEQWSGCPKCELQSGESDKPCATICGEPKCYCSPDKYRRIPDGRCIRKIQC) enclose the TIL domain.

The protein resides in the secreted. Functionally, defends the organism against the host's proteinases. This is Serine protease inhibitor 3 from Anisakis simplex (Herring worm).